Consider the following 370-residue polypeptide: Protein RKD5 (370 aa).

A disordered region spans residues 193–232; it reads DSETESEESVNEKTEHSEFENDKTEQSESDAKTEILKKKK. A compositionally biased stretch (basic and acidic residues) spans 202–228; it reads VNEKTEHSEFENDKTEQSESDAKTEIL. One can recognise an RWP-RK domain in the interval 224 to 309; it reads KTEILKKKKR…AEKQQEKNEA (86 aa). Residues 283–328 adopt a coiled-coil conformation; that stretch reads HRKIKSLDCLIHDLQREAEKQQEKNEAAAMAVAKKQEKLETEKRNI. Residues 347 to 370 form a disordered region; that stretch reads NFKKRHRASRAKKNQESLVTSSST. The span at 349–358 shows a compositional bias: basic residues; sequence KKRHRASRAK.

It is found in the nucleus. In terms of biological role, putative transcription factor. This is Protein RKD5 (RKD5) from Arabidopsis thaliana (Mouse-ear cress).